The primary structure comprises 91 residues: DNA-directed RNA polymerase subunit omega (91 aa).

Belongs to the RNA polymerase subunit omega family. In terms of assembly, the RNAP catalytic core consists of 2 alpha, 1 beta, 1 beta' and 1 omega subunit. When a sigma factor is associated with the core the holoenzyme is formed, which can initiate transcription.

It carries out the reaction RNA(n) + a ribonucleoside 5'-triphosphate = RNA(n+1) + diphosphate. Its function is as follows. Promotes RNA polymerase assembly. Latches the N- and C-terminal regions of the beta' subunit thereby facilitating its interaction with the beta and alpha subunits. The sequence is that of DNA-directed RNA polymerase subunit omega from Enterobacter sp. (strain 638).